We begin with the raw amino-acid sequence, 218 residues long: Ribosomal RNA small subunit methyltransferase G (218 aa).

S-adenosyl-L-methionine contacts are provided by residues Gly82, Leu87, 137 to 138 (VE), and Arg152.

It belongs to the methyltransferase superfamily. RNA methyltransferase RsmG family.

It is found in the cytoplasm. The enzyme catalyses guanosine(527) in 16S rRNA + S-adenosyl-L-methionine = N(7)-methylguanosine(527) in 16S rRNA + S-adenosyl-L-homocysteine. Its function is as follows. Specifically methylates the N7 position of guanine in position 527 of 16S rRNA. The polypeptide is Ribosomal RNA small subunit methyltransferase G (Herminiimonas arsenicoxydans).